The following is a 94-amino-acid chain: Integration host factor subunit beta (94 aa).

Belongs to the bacterial histone-like protein family. Heterodimer of an alpha and a beta chain.

Its function is as follows. This protein is one of the two subunits of integration host factor, a specific DNA-binding protein that functions in genetic recombination as well as in transcriptional and translational control. The chain is Integration host factor subunit beta from Yersinia enterocolitica serotype O:8 / biotype 1B (strain NCTC 13174 / 8081).